We begin with the raw amino-acid sequence, 566 residues long: E3 ubiquitin-protein ligase RNF220 (566 aa).

A Glycyl lysine isopeptide (Lys-Gly) (interchain with G-Cter in SUMO2) cross-link involves residue lysine 277. A disordered region spans residues 277-297 (KREGESPTASPHSSATDDLHH). Phosphoserine is present on serine 390. A coiled-coil region spans residues 485-513 (EDSAVTTFEALKARVRELERQLSRGDRYK). The tract at residues 514–522 (CLICMDSYS) is required for targeting to the cytoplasm. The RING-type zinc-finger motif lies at 514 to 553 (CLICMDSYSMPLTSIQCWHVHCEECWLRTLGAKKLCPQCN).

As to quaternary structure, interacts with SIN3B. Interacts with CTNNB1 (via Armadillo repeats 2-8). Interacts with USP7 (via MATH domain). Post-translationally, auto-ubiquitinated; leads to proteasomal degradation.

It is found in the cytoplasm. It localises to the nucleus. It catalyses the reaction S-ubiquitinyl-[E2 ubiquitin-conjugating enzyme]-L-cysteine + [acceptor protein]-L-lysine = [E2 ubiquitin-conjugating enzyme]-L-cysteine + N(6)-ubiquitinyl-[acceptor protein]-L-lysine.. It participates in protein modification; protein ubiquitination. Its function is as follows. E3 ubiquitin-protein ligase that promotes the ubiquitination and proteasomal degradation of SIN3B. Independently of its E3 ligase activity, acts as a CTNNB1 stabilizer through USP7-mediated deubiquitination of CTNNB1 and promotes Wnt signaling. Plays a critical role in the regulation of nuclear lamina. The protein is E3 ubiquitin-protein ligase RNF220 (RNF220) of Macaca fascicularis (Crab-eating macaque).